The sequence spans 169 residues: ATP synthase subunit b (169 aa).

A helical membrane pass occupies residues 13–33 (LFLFQLINFLIIVFILKKFLF).

It belongs to the ATPase B chain family. In terms of assembly, F-type ATPases have 2 components, F(1) - the catalytic core - and F(0) - the membrane proton channel. F(1) has five subunits: alpha(3), beta(3), gamma(1), delta(1), epsilon(1). F(0) has three main subunits: a(1), b(2) and c(10-14). The alpha and beta chains form an alternating ring which encloses part of the gamma chain. F(1) is attached to F(0) by a central stalk formed by the gamma and epsilon chains, while a peripheral stalk is formed by the delta and b chains.

The protein resides in the cell inner membrane. Its function is as follows. F(1)F(0) ATP synthase produces ATP from ADP in the presence of a proton or sodium gradient. F-type ATPases consist of two structural domains, F(1) containing the extramembraneous catalytic core and F(0) containing the membrane proton channel, linked together by a central stalk and a peripheral stalk. During catalysis, ATP synthesis in the catalytic domain of F(1) is coupled via a rotary mechanism of the central stalk subunits to proton translocation. Component of the F(0) channel, it forms part of the peripheral stalk, linking F(1) to F(0). The protein is ATP synthase subunit b of Endomicrobium trichonymphae.